Consider the following 325-residue polypeptide: MNALTAVKANTDDLAQRHTGFTLAPSAQSPRLLALTFTADTTKQFLHQVAQWPVQALEYKSFLRFKIGKILDDLCGNQLQPLLIKTLLNRAQGALLISAEGIDDVAQAEEMVKLATAVAHLIGRSNYDAMSGQYYARFVVKNVDNSDSYLRQPHRVMELHNDGTYVEEVTDYVLMMKIDEQNMEGGNSLLLHLDDWEHLESFFTHPLARRVMRWAAPPSKNVSHDVWHPVFDVDQQGRPVMRYIDQFVQPKDFEEGVWLSELSDALETSQNILSVPVPVGKFLLINNLFWLHGRDRFTPHPDLRRELMRQRGYFAYAASHYQTHQ.

Fe cation contacts are provided by His160, Asp162, and His292.

This sequence belongs to the glutarate hydroxylase family. In terms of assembly, homotetramer. Requires Fe(2+) as cofactor.

The enzyme catalyses glutarate + 2-oxoglutarate + O2 = (S)-2-hydroxyglutarate + succinate + CO2. The protein operates within amino-acid degradation. Functionally, acts as an alpha-ketoglutarate-dependent dioxygenase catalyzing hydroxylation of glutarate (GA) to L-2-hydroxyglutarate (L2HG). Functions in a L-lysine degradation pathway that proceeds via cadaverine, glutarate and L-2-hydroxyglutarate. This chain is Glutarate 2-hydroxylase, found in Salmonella typhimurium (strain SL1344).